A 305-amino-acid chain; its full sequence is Ornithine carbamoyltransferase (305 aa).

Carbamoyl phosphate-binding positions include 53 to 56, Gln80, Arg104, and 131 to 134; these read STRT and HPCQ. L-ornithine contacts are provided by residues Asn162, Asp219, and 223-224; that span reads SM. Carbamoyl phosphate is bound by residues 259–260 and Arg287; that span reads CL.

This sequence belongs to the aspartate/ornithine carbamoyltransferase superfamily. OTCase family.

Its subcellular location is the cytoplasm. The catalysed reaction is carbamoyl phosphate + L-ornithine = L-citrulline + phosphate + H(+). It participates in amino-acid biosynthesis; L-arginine biosynthesis; L-arginine from L-ornithine and carbamoyl phosphate: step 1/3. In terms of biological role, reversibly catalyzes the transfer of the carbamoyl group from carbamoyl phosphate (CP) to the N(epsilon) atom of ornithine (ORN) to produce L-citrulline. The sequence is that of Ornithine carbamoyltransferase from Psychrobacter cryohalolentis (strain ATCC BAA-1226 / DSM 17306 / VKM B-2378 / K5).